The primary structure comprises 178 residues: Crossover junction endodeoxyribonuclease RuvC (178 aa).

Residues D11, E71, and D143 contribute to the active site. Residues D11, E71, and D143 each coordinate Mg(2+).

Belongs to the RuvC family. As to quaternary structure, homodimer which binds Holliday junction (HJ) DNA. The HJ becomes 2-fold symmetrical on binding to RuvC with unstacked arms; it has a different conformation from HJ DNA in complex with RuvA. In the full resolvosome a probable DNA-RuvA(4)-RuvB(12)-RuvC(2) complex forms which resolves the HJ. Mg(2+) is required as a cofactor.

The protein resides in the cytoplasm. It catalyses the reaction Endonucleolytic cleavage at a junction such as a reciprocal single-stranded crossover between two homologous DNA duplexes (Holliday junction).. Functionally, the RuvA-RuvB-RuvC complex processes Holliday junction (HJ) DNA during genetic recombination and DNA repair. Endonuclease that resolves HJ intermediates. Cleaves cruciform DNA by making single-stranded nicks across the HJ at symmetrical positions within the homologous arms, yielding a 5'-phosphate and a 3'-hydroxyl group; requires a central core of homology in the junction. The consensus cleavage sequence is 5'-(A/T)TT(C/G)-3'. Cleavage occurs on the 3'-side of the TT dinucleotide at the point of strand exchange. HJ branch migration catalyzed by RuvA-RuvB allows RuvC to scan DNA until it finds its consensus sequence, where it cleaves and resolves the cruciform DNA. This Neisseria meningitidis serogroup C / serotype 2a (strain ATCC 700532 / DSM 15464 / FAM18) protein is Crossover junction endodeoxyribonuclease RuvC.